Here is a 410-residue protein sequence, read N- to C-terminus: Na(+)/H(+) antiporter NhaS4 (410 aa).

The next 11 membrane-spanning stretches (helical) occupy residues 7-27, 33-53, 69-89, 107-127, 135-155, 173-193, 199-219, 241-261, 291-311, 319-339, and 376-396; these read LLIL…GLLF, PPVI…LGLL, FLYL…GLEL, VSIF…LYSL, FIPF…PVLA, LTCA…AIAV, IFGA…MVTL, LLTF…WIGI, FVST…TDLG, WAVC…GVYV, and GVIS…TTII.

The protein belongs to the monovalent cation:proton antiporter 2 (CPA2) transporter (TC 2.A.37) family.

Its subcellular location is the membrane. Functionally, na(+)/H(+) antiporter. This Synechocystis sp. (strain ATCC 27184 / PCC 6803 / Kazusa) protein is Na(+)/H(+) antiporter NhaS4 (nhaS4).